Consider the following 317-residue polypeptide: MKILLANPRGFCAGVDRAISIVERALELYQPPIYVRHEVVHNRFVVEGLKQRGAIFVEELHEVPDNNIVIFSAHGVSQAVRQEAKQRDLTVFDATCPLVTKVHMEVARASRRNMEVVLIGHAGHPEVEGTMGQYSSETGGMYLVETPADVEKLKAIVKDPSDLHYVSQTTLSVDETADVIEELRRVFPDIQGPRKDDICYATQNRQDAVRELAGDVDVMVVVGSKNSSNSTRLKELAEKLGTPGYLTDCPEDIKPEWFEGKTKVGVTAGASAPEELVNQILERIKELVGARSVDEVLGREENMFFEVPKELQIKQVD.

Cysteine 12 provides a ligand contact to [4Fe-4S] cluster. Histidine 41 and histidine 74 together coordinate (2E)-4-hydroxy-3-methylbut-2-enyl diphosphate. Residues histidine 41 and histidine 74 each coordinate dimethylallyl diphosphate. 2 residues coordinate isopentenyl diphosphate: histidine 41 and histidine 74. Position 96 (cysteine 96) interacts with [4Fe-4S] cluster. (2E)-4-hydroxy-3-methylbut-2-enyl diphosphate is bound at residue histidine 124. Histidine 124 contacts dimethylallyl diphosphate. An isopentenyl diphosphate-binding site is contributed by histidine 124. Glutamate 126 serves as the catalytic Proton donor. Threonine 169 contributes to the (2E)-4-hydroxy-3-methylbut-2-enyl diphosphate binding site. A [4Fe-4S] cluster-binding site is contributed by cysteine 199. (2E)-4-hydroxy-3-methylbut-2-enyl diphosphate contacts are provided by serine 227, serine 228, asparagine 229, and serine 271. Dimethylallyl diphosphate contacts are provided by serine 227, serine 228, asparagine 229, and serine 271. 4 residues coordinate isopentenyl diphosphate: serine 227, serine 228, asparagine 229, and serine 271.

Belongs to the IspH family. [4Fe-4S] cluster is required as a cofactor.

It catalyses the reaction isopentenyl diphosphate + 2 oxidized [2Fe-2S]-[ferredoxin] + H2O = (2E)-4-hydroxy-3-methylbut-2-enyl diphosphate + 2 reduced [2Fe-2S]-[ferredoxin] + 2 H(+). The catalysed reaction is dimethylallyl diphosphate + 2 oxidized [2Fe-2S]-[ferredoxin] + H2O = (2E)-4-hydroxy-3-methylbut-2-enyl diphosphate + 2 reduced [2Fe-2S]-[ferredoxin] + 2 H(+). It participates in isoprenoid biosynthesis; dimethylallyl diphosphate biosynthesis; dimethylallyl diphosphate from (2E)-4-hydroxy-3-methylbutenyl diphosphate: step 1/1. It functions in the pathway isoprenoid biosynthesis; isopentenyl diphosphate biosynthesis via DXP pathway; isopentenyl diphosphate from 1-deoxy-D-xylulose 5-phosphate: step 6/6. In terms of biological role, catalyzes the conversion of 1-hydroxy-2-methyl-2-(E)-butenyl 4-diphosphate (HMBPP) into a mixture of isopentenyl diphosphate (IPP) and dimethylallyl diphosphate (DMAPP). Acts in the terminal step of the DOXP/MEP pathway for isoprenoid precursor biosynthesis. This chain is 4-hydroxy-3-methylbut-2-enyl diphosphate reductase, found in Vibrio parahaemolyticus serotype O3:K6 (strain RIMD 2210633).